Reading from the N-terminus, the 270-residue chain is Putative pyruvate, phosphate dikinase regulatory protein (270 aa).

153–160 (GVSRTSKT) contributes to the ADP binding site.

Belongs to the pyruvate, phosphate/water dikinase regulatory protein family. PDRP subfamily.

The catalysed reaction is N(tele)-phospho-L-histidyl/L-threonyl-[pyruvate, phosphate dikinase] + ADP = N(tele)-phospho-L-histidyl/O-phospho-L-threonyl-[pyruvate, phosphate dikinase] + AMP + H(+). It carries out the reaction N(tele)-phospho-L-histidyl/O-phospho-L-threonyl-[pyruvate, phosphate dikinase] + phosphate + H(+) = N(tele)-phospho-L-histidyl/L-threonyl-[pyruvate, phosphate dikinase] + diphosphate. Bifunctional serine/threonine kinase and phosphorylase involved in the regulation of the pyruvate, phosphate dikinase (PPDK) by catalyzing its phosphorylation/dephosphorylation. The protein is Putative pyruvate, phosphate dikinase regulatory protein of Halalkalibacterium halodurans (strain ATCC BAA-125 / DSM 18197 / FERM 7344 / JCM 9153 / C-125) (Bacillus halodurans).